A 588-amino-acid chain; its full sequence is bZip transcription factor GAP1 (588 aa).

A disordered region spans residues methionine 1–lysine 49. A compositionally biased stretch (basic and acidic residues) spans tyrosine 20–methionine 29. The bZIP domain maps to proline 25–tyrosine 88. A basic motif region spans residues arginine 28–lysine 51. The leucine-zipper stretch occupies residues leucine 53–leucine 60. A compositionally biased stretch (polar residues) spans phenylalanine 164–glycine 174. The disordered stretch occupies residues phenylalanine 164–tryptophan 219. Low complexity predominate over residues asparagine 175 to alanine 189. Transcription activation stretches follow at residues alanine 189–tryptophan 327 and glycine 376–glutamate 477. Residues lysine 190–glutamate 217 are compositionally biased toward polar residues. Residues cysteine 253 to cysteine 265 are n-CRD. The segment at aspartate 487–arginine 529 is disordered. Over residues aspartate 511–aspartate 522 the composition is skewed to acidic residues. The segment at cysteine 536–cysteine 567 is c-CRD. Positions isoleucine 552–serine 559 match the Nuclear export signal motif.

Its subcellular location is the nucleus. Functionally, transcription factor that plays a critical role in response to various stresses and reduces the stress through transcriptional activation of its target genes including multidrug transporter FLR1. The chain is bZip transcription factor GAP1 from Candida glabrata (strain ATCC 2001 / BCRC 20586 / JCM 3761 / NBRC 0622 / NRRL Y-65 / CBS 138) (Yeast).